A 210-amino-acid chain; its full sequence is Probable nicotinate-nucleotide adenylyltransferase (210 aa).

The protein belongs to the NadD family.

It carries out the reaction nicotinate beta-D-ribonucleotide + ATP + H(+) = deamido-NAD(+) + diphosphate. Its pathway is cofactor biosynthesis; NAD(+) biosynthesis; deamido-NAD(+) from nicotinate D-ribonucleotide: step 1/1. In terms of biological role, catalyzes the reversible adenylation of nicotinate mononucleotide (NaMN) to nicotinic acid adenine dinucleotide (NaAD). This is Probable nicotinate-nucleotide adenylyltransferase from Streptococcus pyogenes serotype M18 (strain MGAS8232).